A 316-amino-acid chain; its full sequence is Dehydrogenase/reductase SDR family protein 7-like (316 aa).

The Cytoplasmic segment spans residues 1-18; that stretch reads MFFYKIIYFIGFPYIVLR. Residues 19 to 39 form a helical; Signal-anchor for type II membrane protein membrane-spanning segment; sequence LIVSIILPIASLYFIYCNFIA. Over 40-316 the chain is Peroxisomal; it reads PKLREKPESS…HKFASSSVKK (277 aa). 56-80 contacts NAD(+); sequence IITGASSGIGAELAKKYARLGCKVT. Ser194 lines the substrate pocket. Catalysis depends on Tyr207, which acts as the Proton acceptor.

It belongs to the short-chain dehydrogenases/reductases (SDR) family.

The protein localises to the peroxisome membrane. In terms of biological role, putative oxidoreductase. The sequence is that of Dehydrogenase/reductase SDR family protein 7-like from Dictyostelium discoideum (Social amoeba).